A 158-amino-acid chain; its full sequence is Crossover junction endodeoxyribonuclease RuvC (158 aa).

Residues aspartate 7, glutamate 66, and aspartate 139 contribute to the active site. 3 residues coordinate Mg(2+): aspartate 7, glutamate 66, and aspartate 139.

This sequence belongs to the RuvC family. As to quaternary structure, homodimer which binds Holliday junction (HJ) DNA. The HJ becomes 2-fold symmetrical on binding to RuvC with unstacked arms; it has a different conformation from HJ DNA in complex with RuvA. In the full resolvosome a probable DNA-RuvA(4)-RuvB(12)-RuvC(2) complex forms which resolves the HJ. Requires Mg(2+) as cofactor.

The protein resides in the cytoplasm. The enzyme catalyses Endonucleolytic cleavage at a junction such as a reciprocal single-stranded crossover between two homologous DNA duplexes (Holliday junction).. Functionally, the RuvA-RuvB-RuvC complex processes Holliday junction (HJ) DNA during genetic recombination and DNA repair. Endonuclease that resolves HJ intermediates. Cleaves cruciform DNA by making single-stranded nicks across the HJ at symmetrical positions within the homologous arms, yielding a 5'-phosphate and a 3'-hydroxyl group; requires a central core of homology in the junction. The consensus cleavage sequence is 5'-(A/T)TT(C/G)-3'. Cleavage occurs on the 3'-side of the TT dinucleotide at the point of strand exchange. HJ branch migration catalyzed by RuvA-RuvB allows RuvC to scan DNA until it finds its consensus sequence, where it cleaves and resolves the cruciform DNA. The protein is Crossover junction endodeoxyribonuclease RuvC of Nitratiruptor sp. (strain SB155-2).